Reading from the N-terminus, the 100-residue chain is MKKIVLLIVSLAAFAFGADGEMIRSYSVIAAGIGLGLAALGGAIGMGNTAAATISGTARNPGVGSKLMTTMFIALAMIEAQVIYALVITLIVLYANPMLG.

Transmembrane regions (helical) follow at residues 27 to 47 (SVIA…IGMG) and 72 to 92 (FIAL…TLIV).

This sequence belongs to the ATPase C chain family. In terms of assembly, F-type ATPases have 2 components, F(1) - the catalytic core - and F(0) - the membrane proton channel. F(1) has five subunits: alpha(3), beta(3), gamma(1), delta(1), epsilon(1). F(0) has three main subunits: a(1), b(2) and c(10-14). The alpha and beta chains form an alternating ring which encloses part of the gamma chain. F(1) is attached to F(0) by a central stalk formed by the gamma and epsilon chains, while a peripheral stalk is formed by the delta and b chains.

The protein resides in the cell inner membrane. F(1)F(0) ATP synthase produces ATP from ADP in the presence of a proton or sodium gradient. F-type ATPases consist of two structural domains, F(1) containing the extramembraneous catalytic core and F(0) containing the membrane proton channel, linked together by a central stalk and a peripheral stalk. During catalysis, ATP synthesis in the catalytic domain of F(1) is coupled via a rotary mechanism of the central stalk subunits to proton translocation. The sequence is that of ATP synthase subunit c from Campylobacter curvus (strain 525.92).